The following is a 355-amino-acid chain: uncharacterized protein (355 aa).

Residues 1 to 104 form a disordered region; the sequence is MGTKGLPLYP…EQAKTVQGGR (104 aa). At Lys19 the chain carries N6-acetyllysine. Residues 45–54 show a composition bias toward acidic residues; it reads EEGTDLEGDM. Ser175 is modified (phosphoserine). Disordered stretches follow at residues 247 to 310 and 325 to 355; these read PRGS…AAYK and SITS…GKKP. Phosphotyrosine is present on Tyr293. Position 294 is a phosphoserine (Ser294). The segment covering 325–334 has biased composition (polar residues); it reads SITSLSSRTT. Positions 336 to 348 are enriched in low complexity; it reads LPAADPFALAPFP.

This is an uncharacterized protein from Homo sapiens (Human).